We begin with the raw amino-acid sequence, 215 residues long: Nascent polypeptide-associated complex subunit alpha (215 aa).

Positions 1-81 (MPGEATETVP…SEKKARKAMS (81 aa)) are disordered. The span at 9–28 (VPATEQELPQPQAETGSGTE) shows a compositional bias: polar residues. A compositionally biased stretch (acidic residues) spans 29 to 42 (SDSDESVPELEEQD). The residue at position 43 (Ser43) is a Phosphoserine; by ILK1. Over residues 44–57 (TQATTQQAQLAAAA) the composition is skewed to low complexity. The tract at residues 69–80 (QSRSEKKARKAM) is required for DNA-binding. Residues 70 to 135 (SRSEKKARKA…AKIEDLSQQA (66 aa)) form the NAC-A/B domain. The interval 93-108 (RVTIRKSKNILFVITK) is RNA/DNA-binding. Ser132 is modified (phosphoserine). Residue Lys142 is modified to N6-acetyllysine; alternate. Lys142 participates in a covalent cross-link: Glycyl lysine isopeptide (Lys-Gly) (interchain with G-Cter in SUMO2); alternate. At Thr159 the chain carries Phosphothreonine; by GSK3-beta. Thr161 carries the post-translational modification Phosphothreonine. A phosphoserine mark is found at Ser166, Ser186, Ser191, and Ser203. The 38-residue stretch at 176–213 (VEVKDIELVMSQANVSRAKAVRALKNNSNDIVNAIMEL) folds into the UBA domain.

The protein belongs to the NAC-alpha family. As to quaternary structure, part of the nascent polypeptide-associated complex (NAC), which is a heterodimer of NACA and BTF3 (via NAC-A/B domains). NAC associates with ribosomes through the BTF3/NACB subunit and contacts the ribosomal protein L23, which is positioned near the exiting site. Both subunits can contact nascent polypeptide chains. NACA may also form homodimers, and only this form binds DNA. Interacts with TBP and JUN. In terms of processing, phosphorylation of Ser-43 by ILK during cell adhesion may promote nuclear localization. Phosphorylation of Thr-159 by GSK3B may promote proteasome mediated degradation.

The protein resides in the cytoplasm. Its subcellular location is the nucleus. Its function is as follows. Prevents inappropriate targeting of non-secretory polypeptides to the endoplasmic reticulum (ER). Binds to nascent polypeptide chains as they emerge from the ribosome and blocks their interaction with the signal recognition particle (SRP), which normally targets nascent secretory peptides to the ER. Also reduces the inherent affinity of ribosomes for protein translocation sites in the ER membrane (M sites). May act as a specific coactivator for JUN, binding to DNA and stabilizing the interaction of JUN homodimers with target gene promoters. In Pongo abelii (Sumatran orangutan), this protein is Nascent polypeptide-associated complex subunit alpha (NACA).